The chain runs to 60 residues: DNA-directed RNA polymerase subunit Rpo6 (60 aa).

The protein belongs to the archaeal Rpo6/eukaryotic RPB6 RNA polymerase subunit family. In terms of assembly, part of the RNA polymerase complex.

It localises to the cytoplasm. It catalyses the reaction RNA(n) + a ribonucleoside 5'-triphosphate = RNA(n+1) + diphosphate. In terms of biological role, DNA-dependent RNA polymerase (RNAP) catalyzes the transcription of DNA into RNA using the four ribonucleoside triphosphates as substrates. The sequence is that of DNA-directed RNA polymerase subunit Rpo6 from Picrophilus torridus (strain ATCC 700027 / DSM 9790 / JCM 10055 / NBRC 100828 / KAW 2/3).